We begin with the raw amino-acid sequence, 217 residues long: Growth factor receptor-bound protein 2 (217 aa).

Met1 carries the post-translational modification N-acetylmethionine. The SH3 1 domain occupies 1 to 58; the sequence is MEAIAKYDFKATADDELSFKRGDILKVLNEECDQNWYKAELNGKDGFIPKNYIEMKPH. N6-acetyllysine occurs at positions 6, 50, and 109. Positions 60-152 constitute an SH2 domain; that stretch reads WFFGKIPRAK…NQQIFLRDIE (93 aa). A Glycyl lysine isopeptide (Lys-Gly) (interchain with G-Cter in ubiquitin) cross-link involves residue Lys109. In terms of domain architecture, SH3 2 spans 156–215; that stretch reads QQPTYVQALFDFDPQEDGELGFRRGDFIHVMDNSDPNWWKGACHGQTGMFPRNYVTPVNR. Tyr209 is modified (phosphotyrosine). The residue at position 211 (Thr211) is a Phosphothreonine.

The protein belongs to the GRB2/sem-5/DRK family. As to quaternary structure, homodimer. Associates (via SH2 domain) with activated EGF and PDGF receptors (tyrosine phosphorylated). Interacts with PDGFRA (tyrosine phosphorylated); the interaction may be indirect. Also associates to other cellular Tyr-phosphorylated proteins such as SIT1, IRS1, IRS2, IRS4, SHC and LNK; probably via the concerted action of both its SH2 and SH3 domains. It also seems to interact with RAS in the signaling pathway leading to DNA synthesis. Interacts with SOS1. Forms a complex with MUC1 and SOS1, through interaction of the SH3 domains with SOS1 and the SH2 domain with phosphorylated MUC1. Interacts with phosphorylated MET. Interacts with phosphorylated TOM1L1. Interacts with the phosphorylated C-terminus of SH2B2. Interacts with phosphorylated SIT1, LAX1, LAT, LAT2 and LIME1 upon TCR and/or BCR activation. Interacts with NISCH, PTPNS1 and REPS2. Interacts with syntrophin SNTA1. Interacts (via SH3 domains) with REPS1. Interacts (via SH3 domains) with PIK3C2B. Interacts with CBL and CBLB. Interacts with AJUBA and CLNK. Interacts (via SH2 domain) with TEK/TIE2 (tyrosine phosphorylated). Interacts with SHB, INPP5D/SHIP1, SKAP1 and SKAP2. Interacts with PTPN11. Interacts with PRNP. Interacts with RALGPS1. Interacts with HCST. Interacts with KDR. Interacts with FLT1 (tyrosine-phosphorylated). Interacts with GAPT and PTPRE. Interacts (via SH2 domain) with KIF26A. Interacts (via SH3 2) with GAB2. Interacts with ADAM15. Interacts with THEMIS2. Interacts (via SH2 domain) with AXL (phosphorylated). Interacts (via SH2 domain) with KIT (phosphorylated). Interacts with PTPRJ and BCR. Interacts with PTPN23. Interacts with FLT4 (tyrosine phosphorylated). Interacts with EPHB1 and SHC1; activates the MAPK/ERK cascade to regulate cell migration. Part of a complex including TNK2, GRB2, LTK and one receptor tyrosine kinase (RTK) such as AXL and PDGFRL, in which GRB2 promotes RTK recruitment by TNK2. Interacts (via SH2 domain) with CSF1R (tyrosine phosphorylated). Interacts with ERBB4. Interacts with NTRK1 (phosphorylated upon ligand-binding). Interacts with PTK2/FAK1 (tyrosine phosphorylated). Interacts with PTK2B/PYK2 (tyrosine phosphorylated). Interacts (via SH3 domains) with GAREM1 isoform 1 (via proline-rich domain and tyrosine phosphorylated); the interaction occurs upon EGF stimulation. Interacts with DAB2. Interacts with TESPA1. Interacts with PLCG1, LAT and THEMIS upon TCR activation in thymocytes; the association is weaker in the absence of TESPA1. Interacts with CD28. Interacts with RAB13; may recruit RAB13 to the leading edge of migrating endothelial cells where it can activate RHOA. Interacts with ASAP3 (phosphorylated form). Interacts (via SH2 domain) with PTPRH (phosphorylated form). Interacts with PTPRO (phosphorylated form). Interacts with PTPRB (phosphorylated form). Interacts (via SH3 domain 2) with PRR14 (via proline-rich region). Interacts with FCRL6 (tyrosine phosphorylated form). Interacts with RHEX (via tyrosine-phosphorylated form). Interacts with DENND2B. Interacts with SPRY2. Interacts with LRRC8A. Interacts with PEAK1. Interacts with CD28. Interacts with FCRL1. Interacts with PCNA. Interacts with CD19. Interacts with BECN1. Interacts with RAD51; the interaction inhibits RAD51 ATPase to stabilize RAD51-DNA complex at stalled replication forks. Interacts with MRE11; this interaction recruits MRE11 to the DNA damage sites. Interacts with RIPK1 ans SQSTM1; these interactions play a critical role in regulating programmed necrosis. Interacts with AGO2; this interaction is important for the formation of a ternary complex containing GRB2, AGO2 and DICER1. Interacts with TIGIT; this interaction inhibits PI3K and MAPK signaling cascades. Interacts with CD226; this interaction leads to activation of VAV1, PI3K and PLCG1. In terms of assembly, interacts (via SH2-domain) with SCIMP; this interaction is dependent on phosphorylation of SCIMP 'Tyr-69'. Interacts with SOS1; this interaction competes with GRB2 to bind SOS1 via its N-terminal SH3 domain. As to quaternary structure, (Microbial infection) Interacts (via SH3 domain) with hepatitis E virus/HEV ORF3 protein. In terms of assembly, (Microbial infection) Interacts with hepatitis C virus/HCV protein NS5A via its SH3 domains. (Microbial infection) Interacts with herpes simplex virus 1 protein UL46. As to quaternary structure, (Microbial infection) Interacts with B19 parvovirus protein 11K. In terms of processing, phosphorylation of Tyr-209 in the C-terminal SH3 domain reduces its binding to SOS1. Post-translationally, ubiquitinated by RNF173, leading to proteasomal degradation and inhibition of the RAF/MEK/ERK pathway. In the nucleus, polyubiquitinated by RBBP6 at Lys-109 at DNA damage sites.

The protein localises to the nucleus. The protein resides in the cytoplasm. Its subcellular location is the endosome. It localises to the golgi apparatus. Non-enzymatic adapter protein that plays a pivotal role in precisely regulated signaling cascades from cell surface receptors to cellular responses, including signaling transduction and gene expression. Thus, participates in many biological processes including regulation of innate and adaptive immunity, autophagy, DNA repair or necroptosis. Controls signaling complexes at the T-cell antigen receptor to facilitate the activation, differentiation, and function of T-cells. Mechanistically, engagement of the TCR leads to phosphorylation of the adapter protein LAT, which serves as docking site for GRB2. In turn, GRB2 establishes a a connection with SOS1 that acts as a guanine nucleotide exchange factor and serves as a critical regulator of KRAS/RAF1 leading to MAPKs translocation to the nucleus and activation. Functions also a role in B-cell activation by amplifying Ca(2+) mobilization and activation of the ERK MAP kinase pathway upon recruitment to the phosphorylated B-cell antigen receptor (BCR). Plays a role in switching between autophagy and programmed necrosis upstream of EGFR by interacting with components of necrosomes including RIPK1 and with autophagy regulators SQSTM1 and BECN1. Regulates miRNA biogenesis by forming a functional ternary complex with AGO2 and DICER1. Functions in the replication stress response by protecting DNA at stalled replication forks from MRE11-mediated degradation. Mechanistically, inhibits RAD51 ATPase activity to stabilize RAD51 on stalled replication forks. Additionally, directly recruits and later releases MRE11 at DNA damage sites during the homology-directed repair (HDR) process. Its function is as follows. Does not bind to phosphorylated epidermal growth factor receptor (EGFR) but inhibits EGF-induced transactivation of a RAS-responsive element. Acts as a dominant negative protein over GRB2 and by suppressing proliferative signals, may trigger active programmed cell death. Mechanistically, inhibits RAS-ERK signaling and downstream cell proliferation by competing with GRB2 for SOS1 binding and thus by regulating SOS1 membrane recruitment. This Homo sapiens (Human) protein is Growth factor receptor-bound protein 2 (GRB2).